A 485-amino-acid polypeptide reads, in one-letter code: Glutamyl-tRNA(Gln) amidotransferase subunit A (485 aa).

Catalysis depends on charge relay system residues Lys78 and Ser153. Ser177 serves as the catalytic Acyl-ester intermediate.

The protein belongs to the amidase family. GatA subfamily. Heterotrimer of A, B and C subunits.

It carries out the reaction L-glutamyl-tRNA(Gln) + L-glutamine + ATP + H2O = L-glutaminyl-tRNA(Gln) + L-glutamate + ADP + phosphate + H(+). In terms of biological role, allows the formation of correctly charged Gln-tRNA(Gln) through the transamidation of misacylated Glu-tRNA(Gln) in organisms which lack glutaminyl-tRNA synthetase. The reaction takes place in the presence of glutamine and ATP through an activated gamma-phospho-Glu-tRNA(Gln). This chain is Glutamyl-tRNA(Gln) amidotransferase subunit A, found in Bacillus cereus (strain 03BB102).